A 56-amino-acid chain; its full sequence is FAAVSVDCSEYPKPACTLEYRPLCGSDNKTYANKCNFCNAVVESNGTLTLSHFGKC.

Residues 6–56 (VDCSEYPKPACTLEYRPLCGSDNKTYANKCNFCNAVVESNGTLTLSHFGKC) enclose the Kazal-like domain. Cystine bridges form between C8–C38, C16–C35, and C24–C56. N-linked (GlcNAc...) asparagine glycosylation is present at N45.

It is found in the secreted. This chain is Ovomucoid, found in Callipepla californica (California quail).